A 446-amino-acid chain; its full sequence is Tubulin beta chain (446 aa).

8 residues coordinate GTP: Gln11, Glu69, Ser138, Gly142, Thr143, Gly144, Asn204, and Asn226. Glu69 is a Mg(2+) binding site. Residues 423–446 (QQYQDATADEEEGEYEEEPAEEEQ) form a disordered region. Residues 429-446 (TADEEEGEYEEEPAEEEQ) show a composition bias toward acidic residues.

This sequence belongs to the tubulin family. In terms of assembly, dimer of alpha and beta chains. A typical microtubule is a hollow water-filled tube with an outer diameter of 25 nm and an inner diameter of 15 nM. Alpha-beta heterodimers associate head-to-tail to form protofilaments running lengthwise along the microtubule wall with the beta-tubulin subunit facing the microtubule plus end conferring a structural polarity. Microtubules usually have 13 protofilaments but different protofilament numbers can be found in some organisms and specialized cells. Mg(2+) is required as a cofactor.

The protein localises to the cytoplasm. Its subcellular location is the cytoskeleton. Tubulin is the major constituent of microtubules, a cylinder consisting of laterally associated linear protofilaments composed of alpha- and beta-tubulin heterodimers. Microtubules grow by the addition of GTP-tubulin dimers to the microtubule end, where a stabilizing cap forms. Below the cap, tubulin dimers are in GDP-bound state, owing to GTPase activity of alpha-tubulin. This chain is Tubulin beta chain, found in Pleurotus sajor-caju (Oyster mushroom).